The primary structure comprises 504 residues: ATP synthase subunit alpha 1 (504 aa).

172-179 (GDRQTGKT) serves as a coordination point for ATP.

This sequence belongs to the ATPase alpha/beta chains family. As to quaternary structure, F-type ATPases have 2 components, CF(1) - the catalytic core - and CF(0) - the membrane proton channel. CF(1) has five subunits: alpha(3), beta(3), gamma(1), delta(1), epsilon(1). CF(0) has three main subunits: a(1), b(2) and c(9-12). The alpha and beta chains form an alternating ring which encloses part of the gamma chain. CF(1) is attached to CF(0) by a central stalk formed by the gamma and epsilon chains, while a peripheral stalk is formed by the delta and b chains.

The protein resides in the cell inner membrane. The enzyme catalyses ATP + H2O + 4 H(+)(in) = ADP + phosphate + 5 H(+)(out). Produces ATP from ADP in the presence of a proton gradient across the membrane. The alpha chain is a regulatory subunit. The polypeptide is ATP synthase subunit alpha 1 (Rhodopirellula baltica (strain DSM 10527 / NCIMB 13988 / SH1)).